A 130-amino-acid chain; its full sequence is Small ribosomal subunit protein uS11 (130 aa).

It belongs to the universal ribosomal protein uS11 family. As to quaternary structure, part of the 30S ribosomal subunit. Interacts with proteins S7 and S18. Binds to IF-3.

Located on the platform of the 30S subunit, it bridges several disparate RNA helices of the 16S rRNA. Forms part of the Shine-Dalgarno cleft in the 70S ribosome. This is Small ribosomal subunit protein uS11 from Prochlorococcus marinus (strain MIT 9303).